The following is a 65-amino-acid chain: UPF0434 protein Rpal_0270 (65 aa).

The protein belongs to the UPF0434 family.

The protein is UPF0434 protein Rpal_0270 of Rhodopseudomonas palustris (strain TIE-1).